A 410-amino-acid polypeptide reads, in one-letter code: Sprouty-related, EVH1 domain-containing protein 3 (410 aa).

The WH1 domain maps to 1–113; that stretch reads MVRVRAVVMA…KSLLAALAAL (113 aa). Residues 117–210 are disordered; sequence SLTPSSSSSS…PEPSEPLAGA (94 aa). Low complexity-rich tracts occupy residues 120–130 and 147–165; these read PSSSSSSSSPS and DSSSSHSRQETPPSAAAAP. A KBD domain is found at 195–244; that stretch reads LPFTGIPEPSEPLAGAGGLGWGGRGYEDYRRSGPPAPLALSTCVVRFAKT. Asymmetric dimethylarginine is present on R240. Residue R248 is modified to Omega-N-methylarginine. The disordered stretch occupies residues 258–288; that stretch reads LPAPLTEAAPPAPPARPPPGPGPSSAPAKAS. A compositionally biased stretch (pro residues) spans 267 to 281; it reads PPAPPARPPPGPGPS. An SPR domain is found at 296 to 407; sequence RCVHCRALFR…CAGCGGRHEE (112 aa).

Interacts with palmitoyltransferase ZDHHC17/HIP14; the interaction leads to palmitoylation of SPRED3. In terms of processing, phosphorylated on tyrosine. Palmitoylated by ZDHHC17/HIP14. Post-translationally, ubiquitinated.

It is found in the cell membrane. Tyrosine kinase substrate that inhibits growth-factor-mediated activation of MAP kinase. Inhibits fibroblast growth factor (FGF)-induced retinal lens fiber differentiation, probably by inhibiting FGF-mediated phosphorylation of ERK1/2. Inhibits TGFB-induced epithelial-to-mesenchymal transition in lens epithelial cells. The protein is Sprouty-related, EVH1 domain-containing protein 3 (SPRED3) of Homo sapiens (Human).